The sequence spans 227 residues: UPF0688 protein C1orf174 homolog (227 aa).

Disordered stretches follow at residues 1–122 (MRKR…VSDL) and 207–227 (AKEE…EGNI). A compositionally biased stretch (basic and acidic residues) spans 47–63 (TEKESSKKLRKDEKGPV). Composition is skewed to polar residues over residues 77 to 104 (AASN…NGTR) and 113 to 122 (RLPSSPVSDL).

It belongs to the UPF0688 family.

The protein resides in the nucleus. In Xenopus tropicalis (Western clawed frog), this protein is UPF0688 protein C1orf174 homolog.